Consider the following 97-residue polypeptide: C-C motif chemokine 7 (97 aa).

A signal peptide spans 1–23 (MRISATLLCLLLIAAAFSIQVWA). Pyrrolidone carboxylic acid is present on Gln24. Asn29 carries an N-linked (GlcNAc...) asparagine glycan. 2 disulfide bridges follow: Cys33/Cys57 and Cys34/Cys73.

The protein belongs to the intercrine beta (chemokine CC) family. As to quaternary structure, monomer. Interacts with TNFAIP6 (via Link domain).

It localises to the secreted. In terms of biological role, chemotactic factor that attracts monocytes and eosinophils, but not neutrophils. Augments monocyte anti-tumor activity. The protein is C-C motif chemokine 7 (Ccl7) of Mus musculus (Mouse).